The primary structure comprises 2151 residues: Polycystin-1-like protein 3 (2151 aa).

The first 20 residues, 1-20, serve as a signal peptide directing secretion; sequence MLLQRRSWLWLYIRIGVILG. The Extracellular portion of the chain corresponds to 25-1073; sequence RKPSIREQHG…IKLLLHVTNN (1049 aa). A C-type lectin domain is found at 34–142; the sequence is GGNSCYQLNR…CIEKHHFICQ (109 aa). 2 disulfide bridges follow: cysteine 55–cysteine 141 and cysteine 116–cysteine 133. An N-linked (GlcNAc...) asparagine glycan is attached at asparagine 89. Positions 222 to 245 are enriched in polar residues; sequence SLTGRPQVTSDTLASSSPPQGTSD. Positions 222 to 609 are disordered; that stretch reads SLTGRPQVTS…SSSPPWPVIT (388 aa). A compositionally biased stretch (low complexity) spans 246–348; it reads TPASSSPPQV…ASSSPPQGTS (103 aa). 2 stretches are compositionally biased toward polar residues: residues 349–363 and 371–600; these read DTPA…TLDT and QGTS…TPAS. 5 N-linked (GlcNAc...) asparagine glycosylation sites follow: asparagine 566, asparagine 579, asparagine 592, asparagine 913, and asparagine 951. The GAIN-B domain maps to 899-1061; that stretch reads TSLNTSTDHF…FIVPRTVDVE (163 aa). 2 disulfide bridges follow: cysteine 1011-cysteine 1039 and cysteine 1026-cysteine 1041. The tract at residues 1011 to 1061 is GPS; the sequence is CYFWDRYNRTWKSDGCQVGPKSTILKTQCLCDHLTFFSSDFFIVPRTVDVE. Positions 1045-1061 are stachel; that stretch reads TFFSSDFFIVPRTVDVE. Residues 1074 to 1094 form a helical membrane-spanning segment; that stretch reads PVGVSLLSSLLGFYILLAMWA. The Cytoplasmic portion of the chain corresponds to 1095-1283; that stretch reads SRKDREDMQK…NQFTRVQRLS (189 aa). The region spanning 1119-1236 is the PLAT domain; the sequence is SHYLIQVYTG…GNCERDRVFT (118 aa). Residues 1284–1304 form a helical membrane-spanning segment; the sequence is CCMALLLCDMVINIMFWKMGG. Over 1305 to 1320 the chain is Extracellular; it reads TTAKRGTEQLGPLAVT. A helical transmembrane segment spans residues 1321–1341; it reads LSELLVSIQTSIILFPIHLIF. The Cytoplasmic portion of the chain corresponds to 1342-1533; sequence GRLFQLIHPP…FCLFRWLKCS (192 aa). The helical transmembrane segment at 1534 to 1554 threads the bilayer; that stretch reads CWLLLGVISLASAFFITLYSL. Residues 1555–1575 lie on the Extracellular side of the membrane; the sequence is ELDKDQATSWVISMMLSVLQD. A helical membrane pass occupies residues 1576-1596; it reads IFISQPIKVIFLTLLFSLMAN. Topologically, residues 1597 to 1665 are cytoplasmic; sequence HMPWLNKDKE…KLTGGTLVQI (69 aa). Residues 1666–1676 form a helical membrane-spanning segment; the sequence is LFLTLLMTTVY. Over 1677-1892 the chain is Extracellular; it reads SAKDSSRFFL…SLTSLQSSER (216 aa). 2 N-linked (GlcNAc) asparagine glycosylation sites follow: asparagine 1712 and asparagine 1822. A helical transmembrane segment spans residues 1893–1921; it reads GFAWIVSQVVYYLLVCYYAFIQGCRLKRQ. Residues 1922 to 1930 lie on the Cytoplasmic side of the membrane; it reads RLAFFTRKR. Residues 1931–1949 form a helical membrane-spanning segment; that stretch reads NLLDTSIVLISFSILGLSM. Topologically, residues 1950–1980 are extracellular; it reads QSLSLLHKKMQQYHCDRDRFISFYEALRVNS. The chain crosses the membrane as a helical span at residues 1981–2002; that stretch reads AVTHLRGFLLLFATVRVWDLLR. Residues 2003–2019 lie on the Cytoplasmic side of the membrane; sequence HHAQLQVINKTLSKAWD. The helical transmembrane segment at 2020–2044 threads the bilayer; sequence EVLGFILIIVVLLSSYAMTFNLLFG. The tract at residues 2043–2081 is channel pore-region; that stretch reads FGWSISDYQSFFRSIVTVVGLLMGTSKHKEVIALYPILG. Over 2045–2077 the chain is Extracellular; the sequence is WSISDYQSFFRSIVTVVGLLMGTSKHKEVIALY. A helical membrane pass occupies residues 2078-2097; that stretch reads PILGSLLVLSSIILMGLVII. Topologically, residues 2098–2151 are cytoplasmic; sequence NLFVSAILIAFGKERKACEKEATLTDMLLQKLSSLLGIRLHQNPSEEHADNTGY.

The protein belongs to the polycystin family. In terms of assembly, heterotetramer with PKD2L1, composed of 3 subunit of PKD2L1 and 1 subunit of PKD1L3. Autoproteolytically processed at the GPS region of the GAIN-B domain; this cleavage modulates receptor activity. Expressed in a subset of taste receptor cells (type III taste cells) distinct from those involved in bitter, sweet and umami taste. Expressed in circumvallate and foliate taste buds, but not in surrounding non-gustatory lingual epithelium cells. Expressed in testis.

Its subcellular location is the cell membrane. It carries out the reaction Ca(2+)(in) = Ca(2+)(out). The enzyme catalyses Na(+)(in) = Na(+)(out). The catalysed reaction is K(+)(in) = K(+)(out). It catalyses the reaction Mg(2+)(in) = Mg(2+)(out). The non-selective cation channel is gated following an off-response property by acid: gated open after the removal of acid stimulus, but not during acid application. Non-selective cation channel activity is inhibited by capsaicin. Regulation of non-selective cation channel activity by external Ca(2+) is bimodal, first sensitizing and subsequently inactivating the current. The apo (closed) heterotetramer has an asymmetric selectivity filter (SF) guarded by Lys-2069 in absence of Ca(2+). However, Ca(2+)-entrance to the SF vestibule is accompanied by a swing motion of Lys-2069 on PKD1L3. Pore-forming subunit of a heterotetrameric, non-selective cation channel that is permeable to Ca(2+). Also shows permeability towards NA(1+), K(+) and Mg(2+). Heterotetrameric complex channel is activated by external low pH and Ca(2+), but opens only when the extracellular pH rises again and after the removal of acid stimulus. May act as a sour taste receptor in gustatory cells; however, its contribution to sour taste perception is unclear in vivo and may be indirect. The chain is Polycystin-1-like protein 3 from Mus musculus (Mouse).